We begin with the raw amino-acid sequence, 334 residues long: Methionyl-tRNA formyltransferase (334 aa).

111–114 (SILP) provides a ligand contact to (6S)-5,6,7,8-tetrahydrofolate.

It belongs to the Fmt family.

The enzyme catalyses L-methionyl-tRNA(fMet) + (6R)-10-formyltetrahydrofolate = N-formyl-L-methionyl-tRNA(fMet) + (6S)-5,6,7,8-tetrahydrofolate + H(+). Its function is as follows. Attaches a formyl group to the free amino group of methionyl-tRNA(fMet). The formyl group appears to play a dual role in the initiator identity of N-formylmethionyl-tRNA by promoting its recognition by IF2 and preventing the misappropriation of this tRNA by the elongation apparatus. This Gloeothece citriformis (strain PCC 7424) (Cyanothece sp. (strain PCC 7424)) protein is Methionyl-tRNA formyltransferase.